Here is a 493-residue protein sequence, read N- to C-terminus: Cobyric acid synthase (493 aa).

Residues proline 246–phenylalanine 440 form the GATase cobBQ-type domain. The Nucleophile role is filled by cysteine 326. Residue histidine 432 is part of the active site.

It belongs to the CobB/CobQ family. CobQ subfamily.

The protein operates within cofactor biosynthesis; adenosylcobalamin biosynthesis. In terms of biological role, catalyzes amidations at positions B, D, E, and G on adenosylcobyrinic A,C-diamide. NH(2) groups are provided by glutamine, and one molecule of ATP is hydrogenolyzed for each amidation. The protein is Cobyric acid synthase of Clostridium botulinum (strain Kyoto / Type A2).